A 302-amino-acid chain; its full sequence is NAD kinase 2 (302 aa).

Catalysis depends on Asp-79, which acts as the Proton acceptor. Residues 79 to 80 (DG), 153 to 154 (NE), Asp-183, 194 to 199 (TAYSLS), Ala-218, and Asn-252 each bind NAD(+).

This sequence belongs to the NAD kinase family. The cofactor is a divalent metal cation.

It is found in the cytoplasm. The enzyme catalyses NAD(+) + ATP = ADP + NADP(+) + H(+). Functionally, involved in the regulation of the intracellular balance of NAD and NADP, and is a key enzyme in the biosynthesis of NADP. Catalyzes specifically the phosphorylation on 2'-hydroxyl of the adenosine moiety of NAD to yield NADP. In Prochlorococcus marinus subsp. pastoris (strain CCMP1986 / NIES-2087 / MED4), this protein is NAD kinase 2.